Here is a 571-residue protein sequence, read N- to C-terminus: Proline--tRNA ligase (571 aa).

The protein belongs to the class-II aminoacyl-tRNA synthetase family. ProS type 1 subfamily. Homodimer.

Its subcellular location is the cytoplasm. It catalyses the reaction tRNA(Pro) + L-proline + ATP = L-prolyl-tRNA(Pro) + AMP + diphosphate. Its function is as follows. Catalyzes the attachment of proline to tRNA(Pro) in a two-step reaction: proline is first activated by ATP to form Pro-AMP and then transferred to the acceptor end of tRNA(Pro). As ProRS can inadvertently accommodate and process non-cognate amino acids such as alanine and cysteine, to avoid such errors it has two additional distinct editing activities against alanine. One activity is designated as 'pretransfer' editing and involves the tRNA(Pro)-independent hydrolysis of activated Ala-AMP. The other activity is designated 'posttransfer' editing and involves deacylation of mischarged Ala-tRNA(Pro). The misacylated Cys-tRNA(Pro) is not edited by ProRS. This Actinobacillus pleuropneumoniae serotype 5b (strain L20) protein is Proline--tRNA ligase.